Consider the following 257-residue polypeptide: uncharacterized protein (257 aa).

2 disordered regions span residues 1–164 and 225–257; these read MERS…AGAC and TAWS…RARA. A compositionally biased stretch (basic and acidic residues) spans 10-28; the sequence is CGEEPRSGSRRLPKAEGDK. Over residues 54-65 the composition is skewed to basic residues; the sequence is RPNRASGRRRRS. Residues 125 to 139 show a composition bias toward pro residues; that stretch reads RPTPRPCAGPAPPPA. Residues 144-162 are compositionally biased toward basic residues; the sequence is RCRRPRRWPRAGRRGRRAG.

This is an uncharacterized protein from Homo sapiens (Human).